The following is a 347-amino-acid chain: Actin-like protein MamK (347 aa).

Residues K9, T20 to S21, and D76 each bind ATP. E143 contacts Mg(2+). Residues A164–T166, K218–S222, and G289 each bind ATP.

This sequence belongs to the FtsA/MreB family. MamK subfamily. As to quaternary structure, forms cytoplasmic filaments. Filaments are parallel (polar) and double-helical. MamK subunits from each of the two strands are juxtaposed, each monomer binds ADP. At cell poles and septa interacts with methyl-accepting chemotaxis protein Amb0944 (MCP10). Forms filaments with MamK-like protein.

It localises to the cytoplasm. Its subcellular location is the cytoskeleton. The protein resides in the magnetosome membrane. The enzyme catalyses ATP + H2O = ADP + phosphate + H(+). With respect to regulation, filament turnover is promoted by MamJ and/or LimJ which have overlapping function; at least one other protein is required for turnover. MamK filament dynamics are probably required for the assembly or maintenance of the magnetosome chain. Its function is as follows. Protein with ATPase activity which forms dynamic cytoplasmic filaments (probably with paralog MamK-like) that organize magnetosomes into long chains running parallel to the long axis of the cell. Turnover of MamK filaments is probably promoted by MamK-like, which provides a monomer pool. Forms twisted filaments in the presence of ATP or GTP. Serves to close gaps between magnetosomes in the chain. Interaction with MCP10 is involved in controlling the response to magnetic fields, possibly by controlling flagellar rotation. Expression in E.coli yields a filament in the cell's longitudinal axis; the protein nucleates at several sites and one extremity of the filament is located at the cell pole. This chain is Actin-like protein MamK (mamK), found in Paramagnetospirillum magneticum (strain ATCC 700264 / AMB-1) (Magnetospirillum magneticum).